The chain runs to 300 residues: Small ribosomal subunit protein uS2 (300 aa).

A disordered region spans residues 228-300; it reads RAGLSADKDA…PAAEAPSTEA (73 aa). Low complexity predominate over residues 258-300; sequence AAPAAEAAPAAEAAPAAEAAPAAEAQAAPAAEAPAAEAPSTEA.

Belongs to the universal ribosomal protein uS2 family.

The sequence is that of Small ribosomal subunit protein uS2 from Rhodococcus jostii (strain RHA1).